A 139-amino-acid chain; its full sequence is MLQPKRTKYRKPHNVSYEGKAKGNSYVAFGEYGLVATKGNWIDARAIESARIAISKCLGKTGKMWIRIFPHMSKTKKPLEVRMGSGKGNPEFWVAVVKQGTVMFEVANIPESQMIKALTRAGHKLPVTWKILKREEVSA.

This sequence belongs to the universal ribosomal protein uL16 family. As to quaternary structure, part of the 50S ribosomal subunit.

Its function is as follows. Binds 23S rRNA and is also seen to make contacts with the A and possibly P site tRNAs. The chain is Large ribosomal subunit protein uL16 from Mycoplasma pneumoniae (strain ATCC 29342 / M129 / Subtype 1) (Mycoplasmoides pneumoniae).